A 120-amino-acid chain; its full sequence is Large ribosomal subunit protein bL19 (120 aa).

It belongs to the bacterial ribosomal protein bL19 family.

In terms of biological role, this protein is located at the 30S-50S ribosomal subunit interface and may play a role in the structure and function of the aminoacyl-tRNA binding site. The polypeptide is Large ribosomal subunit protein bL19 (Chlorobium luteolum (strain DSM 273 / BCRC 81028 / 2530) (Pelodictyon luteolum)).